Consider the following 281-residue polypeptide: ATP synthase gamma chain (281 aa).

It belongs to the ATPase gamma chain family. As to quaternary structure, F-type ATPases have 2 components, CF(1) - the catalytic core - and CF(0) - the membrane proton channel. CF(1) has five subunits: alpha(3), beta(3), gamma(1), delta(1), epsilon(1). CF(0) has three main subunits: a, b and c.

The protein localises to the cell inner membrane. Its function is as follows. Produces ATP from ADP in the presence of a proton gradient across the membrane. The gamma chain is believed to be important in regulating ATPase activity and the flow of protons through the CF(0) complex. The protein is ATP synthase gamma chain of Ehrlichia canis (strain Jake).